Here is a 169-residue protein sequence, read N- to C-terminus: Ribosome maturation factor RimP (169 aa).

It belongs to the RimP family.

Its subcellular location is the cytoplasm. Required for maturation of 30S ribosomal subunits. This Pseudomonas putida (strain W619) protein is Ribosome maturation factor RimP.